Reading from the N-terminus, the 248-residue chain is 23S rRNA (guanosine-2'-O-)-methyltransferase RlmB (248 aa).

3 residues coordinate S-adenosyl-L-methionine: G200, I220, and L229.

Belongs to the class IV-like SAM-binding methyltransferase superfamily. RNA methyltransferase TrmH family. RlmB subfamily.

It is found in the cytoplasm. It catalyses the reaction guanosine(2251) in 23S rRNA + S-adenosyl-L-methionine = 2'-O-methylguanosine(2251) in 23S rRNA + S-adenosyl-L-homocysteine + H(+). Its function is as follows. Specifically methylates the ribose of guanosine 2251 in 23S rRNA. This is 23S rRNA (guanosine-2'-O-)-methyltransferase RlmB from Acinetobacter baylyi (strain ATCC 33305 / BD413 / ADP1).